The primary structure comprises 94 residues: MKFLLLVLAALGFLTQVIPASAGGSKCVSNTPAYCRTYCHWGETALFMFNASRKCCISYSFLPKPDLPQLIGNHWQSRRNTQRKDKKQQTTVTS.

A signal peptide spans 1-22; sequence MKFLLLVLAALGFLTQVIPASA. Cystine bridges form between cysteine 27-cysteine 55 and cysteine 39-cysteine 56. The disordered stretch occupies residues 72-94; the sequence is GNHWQSRRNTQRKDKKQQTTVTS. The segment covering 76 to 86 has biased composition (basic residues); sequence QSRRNTQRKDK.

This sequence belongs to the beta-defensin family.

The protein localises to the secreted. Has antibacterial activity. The chain is Beta-defensin 132 (DEFB132) from Gorilla gorilla gorilla (Western lowland gorilla).